Here is a 114-residue protein sequence, read N- to C-terminus: uncharacterized protein (114 aa).

Residues Cys40, Cys106, and Cys108 each coordinate Fe cation.

This sequence belongs to the HesB/IscA family. Ycf83 subfamily.

It is found in the plastid. It localises to the chloroplast. This is an uncharacterized protein from Pyropia yezoensis (Susabi-nori).